Here is a 408-residue protein sequence, read N- to C-terminus: L,D-transpeptidase 2 (408 aa).

Residues 1-34 (MPKVGIAAQAGRTRVRRAWLTALMMTAVMIGAVA) form the signal peptide. A lipid anchor (N-palmitoyl cysteine) is attached at Cys35. Cys35 is lipidated: S-diacylglycerol cysteine. 3 residues coordinate Ca(2+): Asp232, Glu235, and Gly236. The region spanning 253-378 (VIATADDNTK…VKRGDIVEVV (126 aa)) is the L,D-TPase catalytic domain. Substrate is bound by residues Tyr318 and 331 to 332 (SG). His336 (proton donor/acceptor) is an active-site residue. Cys354 (nucleophile) is an active-site residue. Asn356 contacts substrate.

Monomer.

The protein resides in the cell membrane. It participates in cell wall biogenesis; peptidoglycan biosynthesis. With respect to regulation, is irreversibly inactivated by the beta-lactams carbapenems via the formation of a covalent adduct resulting from acylation of the catalytic Cys. In terms of biological role, generates 3-&gt;3 cross-links in peptidoglycan, catalyzing the cleavage of the mDap(3)-D-Ala(4) bond of a tetrapeptide donor stem and the formation of a bond between the carbonyl of mDap(3) of the donor stem and the side chain of mDap(3) of the acceptor stem. Is specific for donor substrates containing a stem tetrapeptide since it cannot use pentapeptide stems. Is essential for virulence in a mouse model of acute infection. This chain is L,D-transpeptidase 2 (ldtB), found in Mycobacterium tuberculosis (strain CDC 1551 / Oshkosh).